Consider the following 143-residue polypeptide: CRISPR-associated endoribonuclease Cas2 (143 aa).

Aspartate 14 serves as a coordination point for Mg(2+).

It belongs to the CRISPR-associated endoribonuclease Cas2 protein family. As to quaternary structure, homodimer, forms a heterotetramer with a Cas1 homodimer. Mg(2+) is required as a cofactor.

In terms of biological role, CRISPR (clustered regularly interspaced short palindromic repeat), is an adaptive immune system that provides protection against mobile genetic elements (viruses, transposable elements and conjugative plasmids). CRISPR clusters contain sequences complementary to antecedent mobile elements and target invading nucleic acids. CRISPR clusters are transcribed and processed into CRISPR RNA (crRNA). Functions as a ssRNA-specific endoribonuclease. Involved in the integration of spacer DNA into the CRISPR cassette. This Campylobacter jejuni subsp. jejuni serotype O:2 (strain ATCC 700819 / NCTC 11168) protein is CRISPR-associated endoribonuclease Cas2.